A 61-amino-acid polypeptide reads, in one-letter code: NPCCDAATCKVTPGSQCAEGLCCDQCKFMKEGTVCRPARGDWNDDTCTGQSADCPRKGIYG.

Residues 1–61 form the Disintegrin domain; that stretch reads NPCCDAATCK…ADCPRKGIYG (61 aa). 5 disulfide bridges follow: Cys-3-Cys-26, Cys-9-Cys-23, Cys-17-Cys-23, Cys-22-Cys-47, and Cys-35-Cys-54. The short motif at 39-41 is the Cell attachment site element; that stretch reads RGD.

This sequence belongs to the venom metalloproteinase (M12B) family. P-II subfamily. P-IIa sub-subfamily. In terms of assembly, monomer (disintegrin). In terms of tissue distribution, expressed by the venom gland.

It localises to the secreted. Functionally, inhibits fibrinogen interaction with platelets. Acts by binding to alpha-IIb/beta-3 (ITGA2B/ITGB3) on the platelet surface and inhibits aggregation induced by ADP, thrombin, platelet-activating factor and collagen. In Crotalus atrox (Western diamondback rattlesnake), this protein is Disintegrin atroxatin.